A 417-amino-acid chain; its full sequence is Alpha-ionylideneethane synthase aba3 (417 aa).

This sequence belongs to the alpha-ionylideneethane synthase family.

It functions in the pathway hormone biosynthesis. Functionally, alpha-ionylideneethane synthase; part of the gene cluster that mediates the biosynthesis of abscisic acid (ABA), a phytohormone that acts antagonistically toward salicylic acid (SA), jasmonic acid (JA) and ethylene (ETH) signaling, to impede plant defense responses. The first step of the pathway catalyzes the reaction from farnesyl diphosphate to alpha-ionylideneethane performed by the alpha-ionylideneethane synthase aba3 via a three-step reaction mechanism involving 2 neutral intermediates, beta-farnesene and allofarnesene. The cytochrome P450 monooxygenase aba1 might then be involved in the conversion of alpha-ionylideneethane to alpha-ionylideneacetic acid. Alpha-ionylideneacetic acid is further converted to abscisic acid in 2 steps involving the cytochrome P450 monooxygenase aba2 and the short-chain dehydrogenase/reductase aba4, via the intermediates 1'-deoxy-ABA or 1',4'-trans-diol-ABA, depending on the order of action of these 2 enzymes. Aba2 is responsible for the hydroxylation of carbon atom C-1' and aba4 might be involved in the oxidation of the C-4' carbon atom. In Botryotinia fuckeliana (Noble rot fungus), this protein is Alpha-ionylideneethane synthase aba3.